The sequence spans 304 residues: Putative S-adenosyl-L-methionine-dependent methyltransferase Mjls_1071 (304 aa).

S-adenosyl-L-methionine is bound by residues D130 and 159–160 (DL).

The protein belongs to the UPF0677 family.

In terms of biological role, exhibits S-adenosyl-L-methionine-dependent methyltransferase activity. This is Putative S-adenosyl-L-methionine-dependent methyltransferase Mjls_1071 from Mycobacterium sp. (strain JLS).